Reading from the N-terminus, the 781-residue chain is Probable beta-D-xylosidase 5 (781 aa).

The N-terminal stretch at 1–23 is a signal peptide; that stretch reads MSIRRFVRLSLLIIALVSSLCES. Asn-43, Asn-103, and Asn-123 each carry an N-linked (GlcNAc...) asparagine glycan. The active site involves Asp-291. Asn-342, Asn-424, Asn-504, Asn-543, Asn-601, and Asn-653 each carry an N-linked (GlcNAc...) asparagine glycan.

Belongs to the glycosyl hydrolase 3 family.

The protein localises to the secreted. The protein resides in the extracellular space. It is found in the extracellular matrix. In Arabidopsis thaliana (Mouse-ear cress), this protein is Probable beta-D-xylosidase 5 (BXL5).